Reading from the N-terminus, the 365-residue chain is Aminomethyltransferase (365 aa).

The protein belongs to the GcvT family. As to quaternary structure, the glycine cleavage system is composed of four proteins: P, T, L and H.

It carries out the reaction N(6)-[(R)-S(8)-aminomethyldihydrolipoyl]-L-lysyl-[protein] + (6S)-5,6,7,8-tetrahydrofolate = N(6)-[(R)-dihydrolipoyl]-L-lysyl-[protein] + (6R)-5,10-methylene-5,6,7,8-tetrahydrofolate + NH4(+). The glycine cleavage system catalyzes the degradation of glycine. In Synechococcus sp. (strain CC9902), this protein is Aminomethyltransferase.